Consider the following 535-residue polypeptide: Putative cysteine ligase BshC (535 aa).

The stretch at 420-477 forms a coiled coil; it reads DTFKALKESINSAYKNLQEKLAPLGADFQKLTGENLGRVMAQVKYLEERAQKYHREKN.

The protein belongs to the BshC family.

Its function is as follows. Involved in bacillithiol (BSH) biosynthesis. May catalyze the last step of the pathway, the addition of cysteine to glucosamine malate (GlcN-Mal) to generate BSH. This Carboxydothermus hydrogenoformans (strain ATCC BAA-161 / DSM 6008 / Z-2901) protein is Putative cysteine ligase BshC.